The chain runs to 181 residues: Alkyl hydroperoxide reductase AhpD (181 aa).

Cys-131 serves as the catalytic Proton donor. A disulfide bond links Cys-131 and Cys-134. The Cysteine sulfenic acid (-SOH) intermediate role is filled by Cys-134.

The protein belongs to the AhpD family.

It carries out the reaction N(6)-[(R)-dihydrolipoyl]-L-lysyl-[lipoyl-carrier protein] + a hydroperoxide = N(6)-[(R)-lipoyl]-L-lysyl-[lipoyl-carrier protein] + an alcohol + H2O. Its function is as follows. Antioxidant protein with alkyl hydroperoxidase activity. Required for the reduction of the AhpC active site cysteine residues and for the regeneration of the AhpC enzyme activity. The sequence is that of Alkyl hydroperoxide reductase AhpD from Bradyrhizobium sp. (strain BTAi1 / ATCC BAA-1182).